A 467-amino-acid chain; its full sequence is RuvB-like helicase 2 (467 aa).

73-80 (GPPSTGKT) provides a ligand contact to ATP.

The protein belongs to the RuvB family. May form heterododecamers with RVB1. Component of the SWR1 chromatin remodeling complex, the INO80 chromatin remodeling complex, and of the R2TP complex.

Its subcellular location is the nucleus. It carries out the reaction ATP + H2O = ADP + phosphate + H(+). In terms of biological role, DNA helicase which participates in several chromatin remodeling complexes, including the SWR1 and the INO80 complexes. The SWR1 complex mediates the ATP-dependent exchange of histone H2A for the H2A variant HZT1 leading to transcriptional regulation of selected genes by chromatin remodeling. The INO80 complex remodels chromatin by shifting nucleosomes and is involved in DNA repair. Also involved in pre-rRNA processing. The polypeptide is RuvB-like helicase 2 (RVB2) (Kluyveromyces lactis (strain ATCC 8585 / CBS 2359 / DSM 70799 / NBRC 1267 / NRRL Y-1140 / WM37) (Yeast)).